The primary structure comprises 549 residues: Glucose-6-phosphate isomerase (549 aa).

E355 functions as the Proton donor in the catalytic mechanism. Residues H387 and K515 contribute to the active site.

Belongs to the GPI family.

The protein localises to the cytoplasm. The enzyme catalyses alpha-D-glucose 6-phosphate = beta-D-fructose 6-phosphate. The protein operates within carbohydrate biosynthesis; gluconeogenesis. Its pathway is carbohydrate degradation; glycolysis; D-glyceraldehyde 3-phosphate and glycerone phosphate from D-glucose: step 2/4. In terms of biological role, catalyzes the reversible isomerization of glucose-6-phosphate to fructose-6-phosphate. The sequence is that of Glucose-6-phosphate isomerase from Haemophilus influenzae (strain 86-028NP).